A 102-amino-acid polypeptide reads, in one-letter code: uncharacterized protein (102 aa).

Residues P1–S13 show a composition bias toward low complexity. Residues P1–V24 form a disordered region.

This is an uncharacterized protein from Human cytomegalovirus (strain AD169) (HHV-5).